The sequence spans 272 residues: Iodotyrosine deiodinase (272 aa).

The helical transmembrane segment at 5–25 threads the bilayer; the sequence is LSGVSYGLLAGILAMLIHLVY. Residues 82 to 86, Ser110, and 110 to 111 contribute to the FMN site; these read RRSVR and SG. 3-iodo-L-tyrosine is bound by residues Ala112, Glu139, Tyr143, and Lys164. Residues 219-221 and Arg261 contribute to the FMN site; that span reads TST.

It belongs to the nitroreductase family. Requires FMN as cofactor.

The protein resides in the membrane. It catalyses the reaction 2 iodide + L-tyrosine + 2 NADP(+) = 3,5-diiodo-L-tyrosine + 2 NADPH + H(+). The enzyme catalyses iodide + L-tyrosine + NADP(+) = 3-iodo-L-tyrosine + NADPH. The catalysed reaction is 3-iodo-L-tyrosine + iodide + NADP(+) = 3,5-diiodo-L-tyrosine + NADPH + H(+). It carries out the reaction L-tyrosine + chloride + NADP(+) = 3-chloro-L-tyrosine + NADPH. It catalyses the reaction bromide + L-tyrosine + NADP(+) = 3-bromo-L-tyrosine + NADPH. Catalyzes the dehalogenation of halotyrosines such as 3,5-diiodo-L-tyrosine. Likely to also catalyze the dehalogenation of other halotyrosines such as 3-bromo-L-tyrosine, 3-chloro-L-tyrosine and 3-iodo-L-tyrosine. This is Iodotyrosine deiodinase from Hydra vulgaris (Hydra).